The sequence spans 468 residues: Tumor necrosis factor receptor superfamily member 10A (468 aa).

Residues 1–23 form the signal peptide; that stretch reads MAPPPARVHLGAFLAVTPNPGSA. The interval 17–82 is disordered; that stretch reads TPNPGSAASG…APGPRPAREA (66 aa). Positions 20–34 are enriched in low complexity; the sequence is PGSAASGTEAAAATP. The Extracellular segment spans residues 24 to 239; that stretch reads ASGTEAAAAT…VHKESGNGHN (216 aa). R52 is subject to Omega-N-methylarginine. Residues 63-74 show a composition bias toward low complexity; that stretch reads GPSARARAGRAP. TNFR-Cys repeat units follow at residues 107-145, 147-188, and 189-229; these read SAAT…PGAC, RCTE…NTAC, and QCKP…DIEC. Cystine bridges form between C132–C145, C148–C164, C167–C180, C170–C188, C190–C204, C207–C221, and C211–C229. An N-linked (GlcNAc...) asparagine glycan is attached at N156. Residues 240 to 262 form a helical membrane-spanning segment; it reads IWVILVVTLVVPLLLVAVLIVCC. Topologically, residues 263–468 are cytoplasmic; that stretch reads CIGSGCGGDP…DGTGSAVSLE (206 aa). The Death domain occupies 365–448; sequence MLFFDKFANI…HAREKIQDLL (84 aa). Phosphoserine occurs at positions 424, 463, and 466.

As to quaternary structure, monomer. Homooligomers and heterooligomers with TNFRSF10B. Three TNFRSF10A molecules interact with the TNFSF10 homotrimer. Can interact with TRADD and RIPK1. Interacts with ARAP1. In the absence of stimulation, interacts with BIRC2, DDX3X and GSK3B. The interaction with BIRC2 and DDX3X is further enhanced upon receptor stimulation and accompanied by DDX3X and BIRC2 cleavage. Interacts with ZDHHC3. Interacts with PTPN6; this interaction enables the inhibition of T-cell receptor signaling via LCK. (Microbial infection) Interacts with HCMV protein UL141; this interaction prevents TNFRSF10A cell surface expression. In terms of processing, palmitoylated. Palmitoylation of TNFRSF10A is required for its association with lipid rafts, oligomerization and function in TRAIL-induced cell death. Palmitoylated by ZDHHC3. Widely expressed. High levels are found in spleen, peripheral blood leukocytes, small intestine and thymus, but also in K-562 erythroleukemia cells, MCF-7 breast carcinoma cells and activated T-cells.

It localises to the cell membrane. The protein localises to the membrane raft. The protein resides in the cytoplasm. Its subcellular location is the cytosol. Receptor for the cytotoxic ligand TNFSF10/TRAIL. The adapter molecule FADD recruits caspase-8 to the activated receptor. The resulting death-inducing signaling complex (DISC) performs caspase-8 proteolytic activation which initiates the subsequent cascade of caspases (aspartate-specific cysteine proteases) mediating apoptosis. Promotes the activation of NF-kappa-B. The polypeptide is Tumor necrosis factor receptor superfamily member 10A (TNFRSF10A) (Homo sapiens (Human)).